We begin with the raw amino-acid sequence, 318 residues long: MTVITIAKRGLPKLTTSTSSTTTASSSSTITSVASSSSSLPLLSNSTSSSIIPSITPPSRNGNPYILDSGDMPNGTVFIVVGGIAGVIFLAILLWWVITTYSSHRLTRSVQDYESKMFSTQHTQFYGDSPYMDYPAKENFQDQVHISESDISPGNKDESVKDALVSHTNNEKPFLSNFERPLSSLVSESNRNSLFISPTGDILYKTRLSKLYQESPRLLQKPVIMTSDNVSTNSLVSTISSSSASSLDNGNEKEVGEDIRKPAKIASSPSRKLLNSPESDGSVNRNHSKGNLLVVQSKRKPTPSTYLEHMLEGKEQDE.

The helical transmembrane segment at 78–98 (FIVVGGIAGVIFLAILLWWVI) threads the bilayer. At serine 129 the chain carries Phosphoserine. Positions 238-247 (TISSSSASSL) are enriched in low complexity. The tract at residues 238–318 (TISSSSASSL…HMLEGKEQDE (81 aa)) is disordered. Residues 250 to 261 (GNEKEVGEDIRK) are compositionally biased toward basic and acidic residues. Residues 276 to 285 (SPESDGSVNR) show a composition bias toward polar residues. Phosphoserine occurs at positions 279, 282, and 288. The span at 309–318 (HMLEGKEQDE) shows a compositional bias: basic and acidic residues. Lysine 314 is covalently cross-linked (Glycyl lysine isopeptide (Lys-Gly) (interchain with G-Cter in ubiquitin)).

It belongs to the PRM5 family.

Its subcellular location is the membrane. This Saccharomyces cerevisiae (strain RM11-1a) (Baker's yeast) protein is Pheromone-regulated membrane protein 5 (PRM5).